The primary structure comprises 687 residues: DNA-directed RNA polymerase subunit beta' (687 aa).

Residues Cys69, Cys71, Cys87, and Cys90 each coordinate Zn(2+). Mg(2+) contacts are provided by Asp492, Asp494, and Asp496.

This sequence belongs to the RNA polymerase beta' chain family. RpoC1 subfamily. As to quaternary structure, in plastids the minimal PEP RNA polymerase catalytic core is composed of four subunits: alpha, beta, beta', and beta''. When a (nuclear-encoded) sigma factor is associated with the core the holoenzyme is formed, which can initiate transcription. Mg(2+) serves as cofactor. Zn(2+) is required as a cofactor.

The protein localises to the plastid. The protein resides in the chloroplast. The catalysed reaction is RNA(n) + a ribonucleoside 5'-triphosphate = RNA(n+1) + diphosphate. DNA-dependent RNA polymerase catalyzes the transcription of DNA into RNA using the four ribonucleoside triphosphates as substrates. The protein is DNA-directed RNA polymerase subunit beta' of Silene latifolia (White campion).